Consider the following 23-residue polypeptide: Basic phospholipase A2 CB2 (23 aa).

Ca(2+) is required as a cofactor. In terms of processing, contains 7 disulfide bonds. As to expression, expressed by the venom gland.

The protein localises to the secreted. It catalyses the reaction a 1,2-diacyl-sn-glycero-3-phosphocholine + H2O = a 1-acyl-sn-glycero-3-phosphocholine + a fatty acid + H(+). Snake venom phospholipase A2 (PLA2) that shows presynaptic neurotoxicity. PLA2 catalyzes the calcium-dependent hydrolysis of the 2-acyl groups in 3-sn-phosphoglycerides. The chain is Basic phospholipase A2 CB2 from Crotalus durissus cumanensis (South American rattlesnake).